Consider the following 143-residue polypeptide: MSLSTKDKDTVTAFWGKVSCKAGDIGTDALSRMLVVYPQTKTYFSHWKELGPGSPPVQKHGMTVMKGVGEAVAKIDDLTAGLLNLSELHAFTLRVDPANFKILSHNILVVFAIMFPHDFTPEVHVSMDKFLAALARALSEKYR.

Serine 2 carries the post-translational modification N-acetylserine. Residues 2 to 143 (SLSTKDKDTV…LARALSEKYR (142 aa)) enclose the Globin domain. Heme b contacts are provided by histidine 60 and histidine 89.

This sequence belongs to the globin family. As to quaternary structure, hb 2 is a heterotetramer of two alpha-2 and two beta chains. Red blood cells.

Functionally, involved in oxygen transport from gills to the various peripheral tissues. This Cottoperca gobio (Frogmouth) protein is Hemoglobin subunit alpha-2.